The primary structure comprises 276 residues: Ribosomal RNA small subunit methyltransferase A (276 aa).

S-adenosyl-L-methionine contacts are provided by asparagine 27, leucine 29, glycine 54, glutamate 75, aspartate 101, and asparagine 123.

It belongs to the class I-like SAM-binding methyltransferase superfamily. rRNA adenine N(6)-methyltransferase family. RsmA subfamily.

The protein resides in the cytoplasm. It carries out the reaction adenosine(1518)/adenosine(1519) in 16S rRNA + 4 S-adenosyl-L-methionine = N(6)-dimethyladenosine(1518)/N(6)-dimethyladenosine(1519) in 16S rRNA + 4 S-adenosyl-L-homocysteine + 4 H(+). Its function is as follows. Specifically dimethylates two adjacent adenosines (A1518 and A1519) in the loop of a conserved hairpin near the 3'-end of 16S rRNA in the 30S particle. May play a critical role in biogenesis of 30S subunits. The protein is Ribosomal RNA small subunit methyltransferase A of Bartonella henselae (strain ATCC 49882 / DSM 28221 / CCUG 30454 / Houston 1) (Rochalimaea henselae).